A 350-amino-acid polypeptide reads, in one-letter code: Galactokinase (350 aa).

Residue 14-17 (EHTD) coordinates substrate. Residues serine 46 and 98–104 (GSGLSSS) each bind ATP. Residues serine 104 and glutamate 136 each contribute to the Mg(2+) site. The active-site Proton acceptor is the aspartate 148. Substrate is bound at residue tyrosine 197.

This sequence belongs to the GHMP kinase family. GalK subfamily.

Its subcellular location is the cytoplasm. The enzyme catalyses alpha-D-galactose + ATP = alpha-D-galactose 1-phosphate + ADP + H(+). The protein operates within carbohydrate metabolism; galactose metabolism. Functionally, catalyzes the transfer of the gamma-phosphate of ATP to D-galactose to form alpha-D-galactose-1-phosphate (Gal-1-P). This chain is Galactokinase, found in Thermococcus kodakarensis (strain ATCC BAA-918 / JCM 12380 / KOD1) (Pyrococcus kodakaraensis (strain KOD1)).